Consider the following 329-residue polypeptide: 36 kDa antigen (329 aa).

Residues 11–31 form a helical membrane-spanning segment; sequence AILTGGGALLLGLIVLFYLAY.

Belongs to the membrane fusion protein (MFP) (TC 8.A.1) family.

Its subcellular location is the membrane. This Helicobacter pylori (strain J99 / ATCC 700824) (Campylobacter pylori J99) protein is 36 kDa antigen.